Consider the following 347-residue polypeptide: S-adenosylmethionine:tRNA ribosyltransferase-isomerase (347 aa).

The protein belongs to the QueA family. Monomer.

Its subcellular location is the cytoplasm. The enzyme catalyses 7-aminomethyl-7-carbaguanosine(34) in tRNA + S-adenosyl-L-methionine = epoxyqueuosine(34) in tRNA + adenine + L-methionine + 2 H(+). It functions in the pathway tRNA modification; tRNA-queuosine biosynthesis. Transfers and isomerizes the ribose moiety from AdoMet to the 7-aminomethyl group of 7-deazaguanine (preQ1-tRNA) to give epoxyqueuosine (oQ-tRNA). This chain is S-adenosylmethionine:tRNA ribosyltransferase-isomerase, found in Pseudomonas aeruginosa (strain UCBPP-PA14).